We begin with the raw amino-acid sequence, 366 residues long: Outer membrane porin C 2 (366 aa).

Residues M1–A21 form the signal peptide.

Belongs to the Gram-negative porin family. In terms of assembly, homotrimer. Forms mixed heterotrimers with OmpF and with PhoE; other mixed heterotrimers are also probable.

It is found in the cell outer membrane. Its function is as follows. Forms pores that allow passive diffusion of small molecules across the outer membrane. Plays a role in virulence. This is Outer membrane porin C 2 from Shigella flexneri serotype 5a (strain M90T).